A 202-amino-acid chain; its full sequence is Holliday junction resolvase RecU (202 aa).

Mg(2+) contacts are provided by T85, D87, E100, and Q119.

It belongs to the RecU family. Requires Mg(2+) as cofactor.

The protein resides in the cytoplasm. The catalysed reaction is Endonucleolytic cleavage at a junction such as a reciprocal single-stranded crossover between two homologous DNA duplexes (Holliday junction).. In terms of biological role, endonuclease that resolves Holliday junction intermediates in genetic recombination. Cleaves mobile four-strand junctions by introducing symmetrical nicks in paired strands. Promotes annealing of linear ssDNA with homologous dsDNA. Required for DNA repair, homologous recombination and chromosome segregation. The chain is Holliday junction resolvase RecU from Streptococcus equi subsp. zooepidemicus (strain MGCS10565).